We begin with the raw amino-acid sequence, 110 residues long: Ribonuclease P protein component 4 (110 aa).

Positions 65, 68, 94, and 97 each coordinate Zn(2+).

The protein belongs to the eukaryotic/archaeal RNase P protein component 4 family. As to quaternary structure, consists of a catalytic RNA component and at least 4-5 protein subunits. Zn(2+) is required as a cofactor.

The protein resides in the cytoplasm. The enzyme catalyses Endonucleolytic cleavage of RNA, removing 5'-extranucleotides from tRNA precursor.. Functionally, part of ribonuclease P, a protein complex that generates mature tRNA molecules by cleaving their 5'-ends. In Methanococcus maripaludis (strain C6 / ATCC BAA-1332), this protein is Ribonuclease P protein component 4.